The chain runs to 335 residues: Vitamin B12 import system permease protein BtuC (335 aa).

The next 8 membrane-spanning stretches (helical) occupy residues 25–45 (LVVM…VWIW), 67–87 (MAVI…QALF), 94–113 (PGLL…AVLL), 117–139 (LLPI…SILL), 153–173 (LLVG…AVYF), 243–263 (VLAI…ISFI), 281–301 (RLLA…DVVA), and 309–329 (ELPI…WLLI).

It belongs to the binding-protein-dependent transport system permease family. FecCD subfamily. As to quaternary structure, the complex is composed of two ATP-binding proteins (BtuD), two transmembrane proteins (BtuC) and a solute-binding protein (BtuF).

It is found in the cell inner membrane. Its function is as follows. Part of the ABC transporter complex BtuCDF involved in vitamin B12 import. Involved in the translocation of the substrate across the membrane. The protein is Vitamin B12 import system permease protein BtuC of Yersinia pseudotuberculosis serotype O:1b (strain IP 31758).